The sequence spans 280 residues: Type II restriction enzyme MboI (280 aa).

This sequence belongs to the DpnII type II restriction endonuclease family.

The enzyme catalyses Endonucleolytic cleavage of DNA to give specific double-stranded fragments with terminal 5'-phosphates.. In terms of biological role, a P subtype restriction enzyme that recognizes the double-stranded unmethylated sequence 5'-GATC-3' and cleaves before G-1. In Moraxella bovis, this protein is Type II restriction enzyme MboI (mboIR).